The sequence spans 65 residues: Large ribosomal subunit protein bL35 (65 aa).

It belongs to the bacterial ribosomal protein bL35 family.

This Wolbachia sp. subsp. Brugia malayi (strain TRS) protein is Large ribosomal subunit protein bL35.